A 281-amino-acid polypeptide reads, in one-letter code: Bis(5'-nucleosyl)-tetraphosphatase, symmetrical (281 aa).

It belongs to the Ap4A hydrolase family.

It carries out the reaction P(1),P(4)-bis(5'-adenosyl) tetraphosphate + H2O = 2 ADP + 2 H(+). Functionally, hydrolyzes diadenosine 5',5'''-P1,P4-tetraphosphate to yield ADP. In Pectobacterium atrosepticum (strain SCRI 1043 / ATCC BAA-672) (Erwinia carotovora subsp. atroseptica), this protein is Bis(5'-nucleosyl)-tetraphosphatase, symmetrical.